The following is a 308-amino-acid chain: Lipoyl synthase 2 (308 aa).

Cys49, Cys54, Cys60, Cys75, Cys79, Cys82, and Ser300 together coordinate [4Fe-4S] cluster. In terms of domain architecture, Radical SAM core spans 61 to 289; the sequence is YASGTATFLL…KRIAEGLGFK (229 aa).

It belongs to the radical SAM superfamily. Lipoyl synthase family. It depends on [4Fe-4S] cluster as a cofactor.

The protein resides in the cytoplasm. It carries out the reaction [[Fe-S] cluster scaffold protein carrying a second [4Fe-4S](2+) cluster] + N(6)-octanoyl-L-lysyl-[protein] + 2 oxidized [2Fe-2S]-[ferredoxin] + 2 S-adenosyl-L-methionine + 4 H(+) = [[Fe-S] cluster scaffold protein] + N(6)-[(R)-dihydrolipoyl]-L-lysyl-[protein] + 4 Fe(3+) + 2 hydrogen sulfide + 2 5'-deoxyadenosine + 2 L-methionine + 2 reduced [2Fe-2S]-[ferredoxin]. Its pathway is protein modification; protein lipoylation via endogenous pathway; protein N(6)-(lipoyl)lysine from octanoyl-[acyl-carrier-protein]: step 2/2. In terms of biological role, catalyzes the radical-mediated insertion of two sulfur atoms into the C-6 and C-8 positions of the octanoyl moiety bound to the lipoyl domains of lipoate-dependent enzymes, thereby converting the octanoylated domains into lipoylated derivatives. This Prochlorococcus marinus (strain SARG / CCMP1375 / SS120) protein is Lipoyl synthase 2.